The sequence spans 598 residues: Beta-galactosidase (598 aa).

Positions 1 to 21 (MLRTTLAPLVLALALALPAAA) are cleaved as a signal peptide. Catalysis depends on glutamate 184, which acts as the Proton donor. Glutamate 260 serves as the catalytic Nucleophile.

The protein belongs to the glycosyl hydrolase 35 family.

It carries out the reaction Hydrolysis of terminal non-reducing beta-D-galactose residues in beta-D-galactosides.. Its function is as follows. Preferentially hydrolyzes beta(1-&gt;3) galactosyl linkages over beta(1-&gt;4) linkages. This is Beta-galactosidase (bga) from Xanthomonas manihotis.